The chain runs to 863 residues: MKALRRFTVRAHLPERLAALDQLSTNLRWSWDKPTQDLFAAIDPALWEQCGHDPVALLGAVNPARLDELALDAEFLGALDELAADLNDYLSRPLWYQEQQDAGVAAQALPTGIAYFSLEFGVAEVLPNYSGGLGILAGDHLKSASDLGVPLIAVGLYYRSGYFRQSLTADGWQHETYPSLDPQGLPLRLLTDANGDPVLVEVALGDNAVLRARIWVAQVGRVPLLLLDSDIPENEHDLRNVTDRLYGGDQEHRIKQEILAGIGGVRAIRAYTAVEKLTPPEVFHMNEGHAGFLGIERIRELVTDAGLDFDTALTVVRSSTVFTTHTPVPAGIDRFPLEMVQRYVNDQRGDGRSRLLPGLPADRIVALGAEDDPAKFNMAHMGLRLAQRANGVSLLHGRVSRAMFNELWAGFDPDEVPIGSVTNGVHAPTWAAPQWLQLGRELAGSDSLREPVVWQRLHQVDPAHLWWIRSQLRSMLVEDVRARLRQSWLERGATDAELGWIATAFDPNVLTVGFARRVPTYKRLTLMLRDPDRLEQLLLDEQRPIQLIVAGKSHPADDGGKALIQQVVRFADRPQVRHRIAFLPNYDMSMARLLYWGCDVWLNNPLRPLEACGTSGMKSALNGGLNLSIRDGWWDEWYDGENGWEIPSADGVADENRRDDLEAGALYDLLAQAVAPKFYERDERGVPQRWVEMVRHTLQTLGPKVLASRMVRDYVEHYYAPAAQSFRRTAGAQFDAARELADYRRRAEEAWPKIEIADVDSTGLPDTPLLGSQLTLTATVRLAGLRPNDVTVQGVLGRVDAGDVLMDPVTVEMAHTGTGDGGYEIFSTTTPLPLAGPVGYTVRVLPRHPMLAASNELGLVTLA.

Lys618 is modified (N6-(pyridoxal phosphate)lysine).

This sequence belongs to the glycogen phosphorylase family. Pyridoxal 5'-phosphate serves as cofactor.

It catalyses the reaction [(1-&gt;4)-alpha-D-glucosyl](n) + phosphate = [(1-&gt;4)-alpha-D-glucosyl](n-1) + alpha-D-glucose 1-phosphate. Phosphorylase is an important allosteric enzyme in carbohydrate metabolism. Enzymes from different sources differ in their regulatory mechanisms and in their natural substrates. However, all known phosphorylases share catalytic and structural properties. The polypeptide is Glycogen phosphorylase (glgP) (Mycobacterium tuberculosis (strain ATCC 25618 / H37Rv)).